Consider the following 540-residue polypeptide: Chaperonin GroEL 2 (540 aa).

Residues 29–32 (TLGP), 86–90 (DGTTT), Gly413, 476–478 (NAA), and Asp492 contribute to the ATP site.

This sequence belongs to the chaperonin (HSP60) family. As to quaternary structure, forms a cylinder of 14 subunits composed of two heptameric rings stacked back-to-back. Interacts with the co-chaperonin GroES.

It localises to the cytoplasm. It catalyses the reaction ATP + H2O + a folded polypeptide = ADP + phosphate + an unfolded polypeptide.. Functionally, together with its co-chaperonin GroES, plays an essential role in assisting protein folding. The GroEL-GroES system forms a nano-cage that allows encapsulation of the non-native substrate proteins and provides a physical environment optimized to promote and accelerate protein folding. The chain is Chaperonin GroEL 2 from Streptomyces albus G.